The chain runs to 382 residues: Galactokinase (382 aa).

Residue 34–37 participates in substrate binding; it reads EHTD. 124 to 130 contributes to the ATP binding site; the sequence is GAGLSSS. 2 residues coordinate Mg(2+): serine 130 and glutamate 162. Aspartate 174 serves as the catalytic Proton acceptor. Tyrosine 223 lines the substrate pocket.

This sequence belongs to the GHMP kinase family. GalK subfamily.

The protein resides in the cytoplasm. It catalyses the reaction alpha-D-galactose + ATP = alpha-D-galactose 1-phosphate + ADP + H(+). It functions in the pathway carbohydrate metabolism; galactose metabolism. Its function is as follows. Catalyzes the transfer of the gamma-phosphate of ATP to D-galactose to form alpha-D-galactose-1-phosphate (Gal-1-P). The chain is Galactokinase from Erwinia tasmaniensis (strain DSM 17950 / CFBP 7177 / CIP 109463 / NCPPB 4357 / Et1/99).